The chain runs to 102 residues: Large ribosomal subunit protein bL28 (102 aa).

Residues 1–20 (MSRRCELTAKGPQVGHKVSH) form a disordered region.

This sequence belongs to the bacterial ribosomal protein bL28 family.

In Bradyrhizobium sp. (strain BTAi1 / ATCC BAA-1182), this protein is Large ribosomal subunit protein bL28.